The chain runs to 469 residues: Ribosomal protein uS12 methylthiotransferase RimO (469 aa).

The MTTase N-terminal domain maps to 34–144 (NKIGFVSLGC…VLEHVHQFAP (111 aa)). Residues cysteine 43, cysteine 79, cysteine 108, cysteine 176, cysteine 180, and cysteine 183 each coordinate [4Fe-4S] cluster. One can recognise a Radical SAM core domain in the interval 162 to 399 (LTPKHYAYLK…MLVQQEISAA (238 aa)). One can recognise a TRAM domain in the interval 402-468 (QKRIGSTMKV…EYDLWGSLVR (67 aa)).

The protein belongs to the methylthiotransferase family. RimO subfamily. It depends on [4Fe-4S] cluster as a cofactor.

It is found in the cytoplasm. It carries out the reaction L-aspartate(89)-[ribosomal protein uS12]-hydrogen + (sulfur carrier)-SH + AH2 + 2 S-adenosyl-L-methionine = 3-methylsulfanyl-L-aspartate(89)-[ribosomal protein uS12]-hydrogen + (sulfur carrier)-H + 5'-deoxyadenosine + L-methionine + A + S-adenosyl-L-homocysteine + 2 H(+). Functionally, catalyzes the methylthiolation of an aspartic acid residue of ribosomal protein uS12. This is Ribosomal protein uS12 methylthiotransferase RimO from Vibrio vulnificus (strain YJ016).